The sequence spans 601 residues: Mitochondrial tRNA methylthiotransferase CDK5RAP1 (601 aa).

A mitochondrion-targeting transit peptide spans M1–H33. The 121-residue stretch at R100 to S220 folds into the MTTase N-terminal domain. Residues C109, C145, C183, C258, C262, and C265 each coordinate [4Fe-4S] cluster. A Radical SAM core domain is found at S244–K512. The region spanning Q515–C590 is the TRAM domain.

This sequence belongs to the methylthiotransferase family. MiaB subfamily. As to quaternary structure, interacts with CDK5R1 (p35 form). CDK5RAP1, CDK5RAP2 and CDK5RAP3 show competitive binding to CDK5R1. Forms a complex with CDK5R1 and CDK5. [4Fe-4S] cluster is required as a cofactor. Expressed in heart, brain, placenta, lung, liver, skeletal muscle, kidney and pancreas. Expressed in neurons of central nervous tissue. In terms of tissue distribution, mainly expressed in brain, placenta and testis. As to expression, high expression in placenta and lung.

The protein localises to the mitochondrion. It carries out the reaction N(6)-dimethylallyladenosine(37) in tRNA + (sulfur carrier)-SH + AH2 + 2 S-adenosyl-L-methionine = 2-methylsulfanyl-N(6)-dimethylallyladenosine(37) in tRNA + (sulfur carrier)-H + 5'-deoxyadenosine + L-methionine + A + S-adenosyl-L-homocysteine + 2 H(+). In terms of biological role, methylthiotransferase that catalyzes the conversion of N6-(dimethylallyl)adenosine (i(6)A) to 2-methylthio-N6-(dimethylallyl)adenosine (ms(2)i(6)A) at position 37 (adjacent to the 3'-end of the anticodon) of four mitochondrial DNA-encoded tRNAs (Ser(UCN), Phe, Tyr and Trp). Essential for efficient and highly accurate protein translation by the ribosome. Specifically inhibits CDK5 activation by CDK5R1. Essential for efficient mitochondrial protein synthesis and respiratory chain; shows pathological consequences in mitochondrial disease. In Homo sapiens (Human), this protein is Mitochondrial tRNA methylthiotransferase CDK5RAP1.